Consider the following 171-residue polypeptide: 3-hydroxydecanoyl-[acyl-carrier-protein] dehydratase (171 aa).

The active site involves H70.

This sequence belongs to the thioester dehydratase family. FabA subfamily. Homodimer.

It is found in the cytoplasm. The enzyme catalyses a (3R)-hydroxyacyl-[ACP] = a (2E)-enoyl-[ACP] + H2O. It carries out the reaction (3R)-hydroxydecanoyl-[ACP] = (2E)-decenoyl-[ACP] + H2O. The catalysed reaction is (2E)-decenoyl-[ACP] = (3Z)-decenoyl-[ACP]. Its pathway is lipid metabolism; fatty acid biosynthesis. Necessary for the introduction of cis unsaturation into fatty acids. Catalyzes the dehydration of (3R)-3-hydroxydecanoyl-ACP to E-(2)-decenoyl-ACP and then its isomerization to Z-(3)-decenoyl-ACP. Can catalyze the dehydratase reaction for beta-hydroxyacyl-ACPs with saturated chain lengths up to 16:0, being most active on intermediate chain length. The polypeptide is 3-hydroxydecanoyl-[acyl-carrier-protein] dehydratase (Pseudomonas syringae pv. syringae (strain B728a)).